A 55-amino-acid chain; its full sequence is Large ribosomal subunit protein bL33 (55 aa).

This sequence belongs to the bacterial ribosomal protein bL33 family.

In Agrobacterium fabrum (strain C58 / ATCC 33970) (Agrobacterium tumefaciens (strain C58)), this protein is Large ribosomal subunit protein bL33.